A 1353-amino-acid chain; its full sequence is Tenascin-R (1353 aa).

The signal sequence occupies residues 1-33; that stretch reads MGTDSENPVLRNVLISFNLLLLGAVLKPFECRL. The stretch at 132–156 forms a coiled coil; it reads SLQELLSRIEMLEREVSMLRDQCNS. N-linked (GlcNAc...) asparagine glycans are attached at residues N179 and N197. EGF-like domains lie at 187-198, 234-260, 265-291, and 292-323; these read CICSEGWAGSNC, CPAGCGSRGLCVDGECICEEGFGGEDC, CPRDCSGRGHCDNGTCVCAEGYAGEDC, and GWLRCPNACSGRGVCQDGLCICEDGYGGQDCS. Residue N277 is glycosylated (N-linked (GlcNAc...) asparagine). Intrachain disulfides connect C296–C306 and C313–C322. 9 consecutive Fibronectin type-III domains span residues 327-419, 420-504, 505-594, 595-686, 687-776, 777-863, 864-952, 953-1037, and 1038-1126; these read PPEN…TPQG, LKFK…TLID, GPTQ…TEID, APKN…TELD, SPRD…VRPI, TQLH…TGMD, APKD…AMDA, PLGV…TLLD, and PPTN…GGRV. 3 N-linked (GlcNAc...) asparagine glycosylation sites follow: N391, N469, and N580. N734, N790, N872, N1031, N1041, N1256, and N1342 each carry an N-linked (GlcNAc...) asparagine glycan. One can recognise a Fibrinogen C-terminal domain in the interval 1124 to 1339; that stretch reads GRVFANPQDC…FVEMKMRPYN (216 aa).

The protein belongs to the tenascin family. Forms homodimers and homotrimers. Interacts with CNTN1, NFASC and CSPG5. In terms of tissue distribution, brain specific.

It is found in the secreted. It localises to the extracellular space. The protein localises to the extracellular matrix. Functionally, neural extracellular matrix (ECM) protein involved in interactions with different cells and matrix components. Involved in cell attachment and neurite formation. Interaction with CNTN1 enhances the neurite outgrowth. In Gallus gallus (Chicken), this protein is Tenascin-R (TNR).